Here is a 2357-residue protein sequence, read N- to C-terminus: MEDDDTLNGEYFQPVEDMITLPILTEESLLLNLKMRYKKKEIYTYTGSILVAVNPYEILPIYTADIVKSYFAKSRNLMLPHIFAVSDAAFTNMIEEGKNQSIIISGESGAGKTESTKLIIQYLAARTNRHSQVEQMIVESSPILEAFGNAKTIRNNNSSRFGKFIEIQFNREGHISGARIINYLLEKSRISHQASSERNYHIFYQLLAGASDELKEKLKLGEPEDYHYLSQSGCIRIENINDVEDFEHVKYAMNVLGLPEDKQFTIFSIVSAVLHIGNLKFEKSEKTQGAEGSEVSNKDTLKIIAQLLSVDPVKLETCLTIRHVLIRGQNFVIPLKVNEAEDTRDSLAKALYGNVFNWLVVFINSKIHKPQKNSTFIGVLDIFGFENFKKNSFEQFCINFANEKLQQHFNQHIFKLEQEEYEKEKINWSKIVYNDNQECLDLIEKRPLGILSLLDEESRFPQATDLTYLDKLHTNHEKHPYYEKPRRSKNTFVVKHYAGEVHYDTQGFLDKNKDTVSDDLSSLLQGSKSKFIIELFTPPREEGDDSDKGREKKKTTAGQTFKTQLQSLINILSSTQPHYVRCIKPNTTKEPAVYDRELIQAQLRYAGMMETIRIRKLGYPIRHTHKEFRDRYLILDYRARSTDHKQTCAGLINLLSGTGGLERDEWQLGNTKVFIRDHQYLKLEELRKLKLLKKVTLIQSVWRMYRCKKRYQQIRASAKILGAAMLSHSSRRDFQEQRQAVQRIKGFFKMLTYQKQFKIIQINLRIVQNNIRSFIARRHSRNAVLLKRDRNARMLEIQREKDEEERNRQEKEERDRQEKEDKEKETADRRQLQEEQKRREEELRAKREEEELKKLEEKKSQLKELNQIDELSSLERMLKEQQDKNINELDDFVNSLEAFSFEGGVDDSQPYSFNHKMYEMSPEALDKISITDLLQGLKQTVRSVTKFEVDESKFELPPGIENVLKRAPGIKRQASSFLPGQPIPDVYSSPQYPVDEADDDDSNNNYINSNNGDLPLPTSQSSDFSLPPPPSSSSMDFGLPPPPPSSSSGGTYSLPPMPVFDFGMIDPILGAPPPPPSTSDSTSPSATATGNNTPNSSSASASQSTNQVNPQPTVSVVELPQILNDEEISLYSFYDYANKNFNIEKLKQKDDIFSYQKSHIKSSLLVHSDAEQTKVAVEIFSKVLHYMNSNPLVSKKDPADFYSPVKFILTKGLAIESLRDEIYCQLIKQSTSNPIQDLNIRVWELIHFTCSTFPPTRKLIKYFAAYLKTTIQQSDVSKSVKDSAQASYFILQRFTLNGARKQVPSVTELESIKENRPIFVRITATDGSLKGLHIDSATTCQESSNDLSQRSRMRVNSKENGFTIIESFNGIERDIAPTDKLCDVLSKVENLQATLSSKIQVNFKFVFKKKLFFDNITNNVPTTSINVENEFYYHQLFNDLFNSNYCKDQDYQISIGSLKLQFESSDYTDEIRAWLPGNGRGKYFTTDIEKNRFDDFINKYKSHKGLSPEDAKKQMVQLLEKHPLANCSLVVCEHQSESLPYPKNFVLALNVNGINIYDPATSKMLESVKYSNQSQQNLKSDDKSVSIILENKSTLQAFTGDVQKLVSLIKEYSLYLRNNAKYARALKDYNVSDTSLLPFKRNDIITITFKDQENKWFMGQLNGKEGSFPVDHVEILLSDVPPPQPVHPVATLSPPMSPTIPNITNTPPPPPSISDSMSPPPQVGMLPPPPPPSVMGSTKPIEIPSLGIPPPPPSSSNSSVPNSPIGSPMMGIPPPPPTISVHSLSNSGNSTPPPPLPSLSTPPTLSTPPPISSPPNFRSSLRVSMLNTSNDGGDNSSDDPSKRLTVSPAIGTDSQLAQWASTRFRSFKRASTLNQQQATLKRKAPVDPNTAFYFNKDPIKESLIEMEAKLSKKAIKNFSEIMMWMGDYPIPKGQTASLVIQSIISRGIENHELRDEIYCQAYRQTNKNPKVESAKKGFELIYFLSITFSPSDSLLQPFMEQLMSRNIAIQSSSPQLASLIAVCIEKLESHPIPSYQQRKMGPSATEIQSFRSNLENGDISTCKIRFIDQSTKLAKINTYTTIREITDTVCRQYGISQQSIKMFGISAVNETAGISKVVSETDMIYDVLARWEQSEEKGEFYFQVRRRFFLDDVNKILDQEHLWTDDDICFELTYCQIRDEWMKGLYTNVNEKDSSIIAAILIQLLYPNQSKLVLTKEVVRQVLPDQILNSQNIKVWISMIESQIFELVSQTPEYLKLMFINLIGSKSPLFGCTLFNIQQKENPPKAWLAINKKGVSIFDPHTKESKNFWTFQSISNVAFTDDTFCIMTGNLMKPIKQTFTTDEHSSIASVYQFYSSQ.

One can recognise a Myosin motor domain in the interval 13–688; sequence QPVEDMITLP…QYLKLEELRK (676 aa). 106–113 lines the ATP pocket; that stretch reads GESGAGKT. The actin-binding stretch occupies residues 579 to 586; the sequence is YVRCIKPN. The IQ domain maps to 691–720; it reads LLKKVTLIQSVWRMYRCKKRYQQIRASAKI. Residues 787–891 adopt a coiled-coil conformation; it reads KRDRNARMLE…QDKNINELDD (105 aa). Residues 787-1076 are binding to talin A; it reads KRDRNARMLE…PILGAPPPPP (290 aa). 2 disordered regions span residues 797 to 852 and 974 to 1112; these read IQRE…EEEL and ASSF…NPQP. Low complexity-rich tracts occupy residues 1003–1025 and 1078–1106; these read NNNY…SDFS and TSDS…QSTN. The MyTH4 1 domain occupies 1155-1313; that stretch reads YQKSHIKSSL…PSVTELESIK (159 aa). One can recognise an FERM 1 domain in the interval 1318-1620; the sequence is IFVRITATDG…EYSLYLRNNA (303 aa). Residues 1618–1678 enclose the SH3 domain; that stretch reads NNAKYARALK…PVDHVEILLS (61 aa). Residues 1686-1849 are disordered; that stretch reads VHPVATLSPP…PSKRLTVSPA (164 aa). Residues 1706-1733 are compositionally biased toward pro residues; it reads TPPPPPSISDSMSPPPQVGMLPPPPPPS. Composition is skewed to low complexity over residues 1734–1746 and 1755–1770; these read VMGS…IPSL and SSNS…SPMM. Over residues 1817-1828 the composition is skewed to polar residues; sequence FRSSLRVSMLNT. The MyTH4 2 domain occupies 1894 to 2051; it reads FNKDPIKESL…PSATEIQSFR (158 aa). Residues 2060–2357 enclose the FERM 2 domain; that stretch reads STCKIRFIDQ…ASVYQFYSSQ (298 aa).

Belongs to the TRAFAC class myosin-kinesin ATPase superfamily. Myosin family. In terms of assembly, monomer. Interacts with talA.

It localises to the cytoplasm. Its function is as follows. Myosins are actin-based motor molecules with ATPase activity. Involved in the early steps of phagocytosis and adhesion. In Dictyostelium discoideum (Social amoeba), this protein is Myosin-I heavy chain (myoI).